A 91-amino-acid chain; its full sequence is ATP synthase subunit c (91 aa).

2 helical membrane passes run 4 to 24 and 53 to 73; these read FTMC…GTGI and IGLA…LIIL.

This sequence belongs to the ATPase C chain family. F-type ATPases have 2 components, F(1) - the catalytic core - and F(0) - the membrane proton channel. F(1) has five subunits: alpha(3), beta(3), gamma(1), delta(1), epsilon(1). F(0) has three main subunits: a(1), b(2) and c(10-14). The alpha and beta chains form an alternating ring which encloses part of the gamma chain. F(1) is attached to F(0) by a central stalk formed by the gamma and epsilon chains, while a peripheral stalk is formed by the delta and b chains.

The protein resides in the cell inner membrane. Functionally, f(1)F(0) ATP synthase produces ATP from ADP in the presence of a proton or sodium gradient. F-type ATPases consist of two structural domains, F(1) containing the extramembraneous catalytic core and F(0) containing the membrane proton channel, linked together by a central stalk and a peripheral stalk. During catalysis, ATP synthesis in the catalytic domain of F(1) is coupled via a rotary mechanism of the central stalk subunits to proton translocation. Key component of the F(0) channel; it plays a direct role in translocation across the membrane. A homomeric c-ring of between 10-14 subunits forms the central stalk rotor element with the F(1) delta and epsilon subunits. This is ATP synthase subunit c from Citrifermentans bemidjiense (strain ATCC BAA-1014 / DSM 16622 / JCM 12645 / Bem) (Geobacter bemidjiensis).